The following is a 264-amino-acid chain: Major prion protein (264 aa).

The first 24 residues, 1–24 (MVKSHIGSWILVLFVAMWSDVGLC), serve as a signal peptide directing secretion. The tract at residues 25 to 241 (KKRPKPGGGW…ESEAYYQRGA (217 aa)) is interaction with GRB2, ERI3 and SYN1. Residues 28 to 118 (PKPGGGWNTG…QWNKPSKPKT (91 aa)) form a disordered region. Repeat copies occupy residues 54–62 (SQGGGGWGQ), 63–70 (PHGGGWGQ), 71–78 (PHGGGWGQ), 79–86 (PHGGGWGQ), 87–94 (PHGGGWGQ), and 95–103 (PHGGGGWGQ). Residues 54-103 (SQGGGGWGQPHGGGWGQPHGGGWGQPHGGGWGQPHGGGWGQPHGGGGWGQ) form a 6 X 8 AA tandem repeats of P-H-G-G-G-W-G-Q region. Residues 55–107 (QGGGGWGQPHGGGWGQPHGGGWGQPHGGGWGQPHGGGWGQPHGGGGWGQGGTH) are compositionally biased toward gly residues. The Cu(2+) site is built by His-72, Gly-73, Gly-74, His-80, Gly-81, Gly-82, His-88, Gly-89, Gly-90, His-96, Gly-98, and Gly-99. Residues Cys-190 and Cys-225 are joined by a disulfide bond. Asn-192 and Asn-208 each carry an N-linked (GlcNAc...) asparagine glycan. Ala-241 is lipidated: GPI-anchor amidated alanine. Positions 242–264 (SVILFSSPPVILLISFLIFLIVG) are cleaved as a propeptide — removed in mature form.

Belongs to the prion family. Monomer and homodimer. Has a tendency to aggregate into amyloid fibrils containing a cross-beta spine, formed by a steric zipper of superposed beta-strands. Soluble oligomers may represent an intermediate stage on the path to fibril formation. Copper binding may promote oligomerization. Interacts with GRB2, APP, ERI3/PRNPIP and SYN1. Mislocalized cytosolically exposed PrP interacts with MGRN1; this interaction alters MGRN1 subcellular location and causes lysosomal enlargement. Interacts with KIAA1191.

Its subcellular location is the cell membrane. The protein localises to the golgi apparatus. Its primary physiological function is unclear. Has cytoprotective activity against internal or environmental stresses. May play a role in neuronal development and synaptic plasticity. May be required for neuronal myelin sheath maintenance. May play a role in iron uptake and iron homeostasis. Soluble oligomers are toxic to cultured neuroblastoma cells and induce apoptosis (in vitro). Association with GPC1 (via its heparan sulfate chains) targets PRNP to lipid rafts. Also provides Cu(2+) or Zn(2+) for the ascorbate-mediated GPC1 deaminase degradation of its heparan sulfate side chains. The sequence is that of Major prion protein (PRNP) from Tragelaphus imberbis (Lesser kudu).